We begin with the raw amino-acid sequence, 306 residues long: Palmitoyl-protein thioesterase 1 (306 aa).

The N-terminal stretch at M1 to L27 is a signal peptide. C6 carries S-palmitoyl cysteine; by ZDHHC3 and ZDHHC7 lipidation. Disulfide bonds link C45–C46, C96–C128, and C152–C160. S115 is a catalytic residue. 3 N-linked (GlcNAc...) asparagine glycosylation sites follow: N197, N212, and N232. Residues D233 and H289 contribute to the active site.

It belongs to the palmitoyl-protein thioesterase family. In terms of assembly, interacts with CLN5. Interacts with ATP5F1A and ATP5F1B. In terms of processing, glycosylated.

It localises to the lysosome. The protein resides in the secreted. Its subcellular location is the golgi apparatus. The protein localises to the endoplasmic reticulum. It carries out the reaction S-hexadecanoyl-L-cysteinyl-[protein] + H2O = L-cysteinyl-[protein] + hexadecanoate + H(+). The catalysed reaction is hexadecanoyl-CoA + H2O = hexadecanoate + CoA + H(+). The enzyme catalyses S-hexadecanoyl-N-acetylcysteamine + H2O = N-acetylcysteamine + hexadecanoate + H(+). It catalyses the reaction S-hexadecanoyl-N-acetylcysteine methyl ester + H2O = N-acetylcysteine methyl ester + hexadecanoate + H(+). With respect to regulation, palmitoylation reduces PPT1 enzymatic activity. Functionally, has thioesterase activity against fatty acid thioesters with 14 -18 carbons, including palmitoyl-CoA, S-palmitoyl-N-acetylcysteamine, and palmitoylated proteins. In contrast to PPT2, PPT1 can hydrolyze palmitoylated proteins and palmitoylcysteine. This is Palmitoyl-protein thioesterase 1 (PPT1) from Homo sapiens (Human).